Reading from the N-terminus, the 505-residue chain is Tyrosine-protein kinase Blk (505 aa).

The disordered stretch occupies residues 1-37; that stretch reads MGLVSSKKPDKEKPIKEKDKGQWSPLKVSAQDKDAPP. G2 carries the N-myristoyl glycine lipid modification. The span at 7 to 21 shows a compositional bias: basic and acidic residues; the sequence is KKPDKEKPIKEKDKG. In terms of domain architecture, SH3 spans 58–118; it reads EDKHFVVALY…PSNFVARVES (61 aa). The region spanning 124 to 220 is the SH2 domain; that stretch reads WFFRSQGRKE…GLCQRLTLPC (97 aa). The 254-residue stretch at 241–494 folds into the Protein kinase domain; that stretch reads LRLVRKLGSG…FLQSVLEDFY (254 aa). Residues 247 to 255 and K269 contribute to the ATP site; that span reads LGSGQFGEV. Catalysis depends on D360, which acts as the Proton acceptor. The residue at position 389 (Y389) is a Phosphotyrosine; by autocatalysis.

It belongs to the protein kinase superfamily. Tyr protein kinase family. SRC subfamily. In terms of assembly, interacts with CBL (via SH2 domain). Interacts with CD79A and CD79B (via SH2 domain). Post-translationally, phosphorylated on tyrosine residues after antibody-mediated surface engagement of the B-cell antigen receptor (BCR). In terms of processing, ubiquitination of activated BLK by the UBE3A ubiquitin protein ligase leads to its degradation by the ubiquitin-proteasome pathway. In terms of tissue distribution, expressed in lymphatic organs, pancreatic islets, Leydig cells, striate ducts of salivary glands and hair follicles.

The protein resides in the cell membrane. It catalyses the reaction L-tyrosyl-[protein] + ATP = O-phospho-L-tyrosyl-[protein] + ADP + H(+). Its activity is regulated as follows. Antibody-mediated surface engagement of the B-cell antigen receptor (BCR) which results in the phosphorylation of BLK on tyrosine residues, stimulates the enzymatic activity. Functionally, non-receptor tyrosine kinase involved in B-lymphocyte development, differentiation and signaling. B-cell receptor (BCR) signaling requires a tight regulation of several protein tyrosine kinases and phosphatases, and associated coreceptors. Binding of antigen to the B-cell antigen receptor (BCR) triggers signaling that ultimately leads to B-cell activation. Signaling through BLK plays an important role in transmitting signals through surface immunoglobulins and supports the pro-B to pre-B transition, as well as the signaling for growth arrest and apoptosis downstream of B-cell receptor. Specifically binds and phosphorylates CD79A at 'Tyr-188'and 'Tyr-199', as well as CD79B at 'Tyr-196' and 'Tyr-207'. Also phosphorylates the immunoglobulin G receptors FCGR2A, FCGR2B and FCGR2C. With FYN and LYN, plays an essential role in pre-B-cell receptor (pre-BCR)-mediated NF-kappa-B activation. Also contributes to BTK activation by indirectly stimulating BTK intramolecular autophosphorylation. In pancreatic islets, acts as a modulator of beta-cells function through the up-regulation of PDX1 and NKX6-1 and consequent stimulation of insulin secretion in response to glucose. Phosphorylates CGAS, promoting retention of CGAS in the cytosol. The protein is Tyrosine-protein kinase Blk (BLK) of Homo sapiens (Human).